Here is a 164-residue protein sequence, read N- to C-terminus: Large ribosomal subunit protein uL15 (164 aa).

The interval 1–52 (MSLSKLKAPKGANRERTRVGRGQGSGLGKTAGRGGKGQKARSGNMHFEGFEG) is disordered. A compositionally biased stretch (gly residues) spans 21–37 (RGQGSGLGKTAGRGGKG).

It belongs to the universal ribosomal protein uL15 family. As to quaternary structure, part of the 50S ribosomal subunit.

Its function is as follows. Binds to the 23S rRNA. This chain is Large ribosomal subunit protein uL15, found in Anaeromyxobacter sp. (strain Fw109-5).